We begin with the raw amino-acid sequence, 255 residues long: Receptor expression-enhancing protein 3 (255 aa).

Helical transmembrane passes span 1-21 (MVSWMISRAVVLVFGMLYPAY), 35-55 (YVRWMMYWIVFALYTVIETVA), and 59-79 (VAWFPLYYELKIAFVIWLLSP). The interval 158–242 (TIQGDEPVGQ…KGRKEVRYGS (85 aa)) is disordered. Position 201 is a phosphothreonine (T201). S210 carries the post-translational modification Phosphoserine. Residues 222–231 (RSQSMKSVKT) are compositionally biased toward polar residues.

It belongs to the DP1 family. As to expression, expressed in circumvallate papillae.

The protein resides in the endoplasmic reticulum membrane. Its function is as follows. Microtubule-binding protein required to ensure proper cell division and nuclear envelope reassembly by sequestering the endoplasmic reticulum away from chromosomes during mitosis. Probably acts by clearing the endoplasmic reticulum membrane from metaphase chromosomes. This Homo sapiens (Human) protein is Receptor expression-enhancing protein 3 (REEP3).